Reading from the N-terminus, the 225-residue chain is UPF0173 metal-dependent hydrolase PH1671 (225 aa).

The protein belongs to the UPF0173 family.

This Pyrococcus horikoshii (strain ATCC 700860 / DSM 12428 / JCM 9974 / NBRC 100139 / OT-3) protein is UPF0173 metal-dependent hydrolase PH1671.